A 405-amino-acid polypeptide reads, in one-letter code: Phosphoglycerate kinase (405 aa).

Residues Asp23 to Asn25, Arg39, His62 to Arg65, Arg121, and Arg154 contribute to the substrate site. ATP is bound by residues Lys207, Gly298, Glu329, and Gly355–Thr358.

The protein belongs to the phosphoglycerate kinase family. In terms of assembly, monomer.

The protein localises to the cytoplasm. It catalyses the reaction (2R)-3-phosphoglycerate + ATP = (2R)-3-phospho-glyceroyl phosphate + ADP. Its pathway is carbohydrate degradation; glycolysis; pyruvate from D-glyceraldehyde 3-phosphate: step 2/5. The sequence is that of Phosphoglycerate kinase from Campylobacter hominis (strain ATCC BAA-381 / DSM 21671 / CCUG 45161 / LMG 19568 / NCTC 13146 / CH001A).